Consider the following 324-residue polypeptide: tRNA U34 carboxymethyltransferase (324 aa).

Carboxy-S-adenosyl-L-methionine is bound by residues K91, W105, K110, G130, 152–154 (DPS), 181–182 (IE), M196, Y200, and R315.

Belongs to the class I-like SAM-binding methyltransferase superfamily. CmoB family. In terms of assembly, homotetramer.

It carries out the reaction carboxy-S-adenosyl-L-methionine + 5-hydroxyuridine(34) in tRNA = 5-carboxymethoxyuridine(34) in tRNA + S-adenosyl-L-homocysteine + H(+). Functionally, catalyzes carboxymethyl transfer from carboxy-S-adenosyl-L-methionine (Cx-SAM) to 5-hydroxyuridine (ho5U) to form 5-carboxymethoxyuridine (cmo5U) at position 34 in tRNAs. The protein is tRNA U34 carboxymethyltransferase of Aliivibrio fischeri (strain ATCC 700601 / ES114) (Vibrio fischeri).